We begin with the raw amino-acid sequence, 86 residues long: ATP synthase subunit c (86 aa).

Transmembrane regions (helical) follow at residues 4-24 (AIVA…GIGA) and 57-77 (VAIA…LLFV).

The protein belongs to the ATPase C chain family. As to quaternary structure, F-type ATPases have 2 components, F(1) - the catalytic core - and F(0) - the membrane proton channel. F(1) has five subunits: alpha(3), beta(3), gamma(1), delta(1), epsilon(1). F(0) has three main subunits: a(1), b(2) and c(10-14). The alpha and beta chains form an alternating ring which encloses part of the gamma chain. F(1) is attached to F(0) by a central stalk formed by the gamma and epsilon chains, while a peripheral stalk is formed by the delta and b chains.

The protein localises to the cell membrane. Its function is as follows. F(1)F(0) ATP synthase produces ATP from ADP in the presence of a proton or sodium gradient. F-type ATPases consist of two structural domains, F(1) containing the extramembraneous catalytic core and F(0) containing the membrane proton channel, linked together by a central stalk and a peripheral stalk. During catalysis, ATP synthesis in the catalytic domain of F(1) is coupled via a rotary mechanism of the central stalk subunits to proton translocation. In terms of biological role, key component of the F(0) channel; it plays a direct role in translocation across the membrane. A homomeric c-ring of between 10-14 subunits forms the central stalk rotor element with the F(1) delta and epsilon subunits. This is ATP synthase subunit c from Clostridioides difficile (strain 630) (Peptoclostridium difficile).